Consider the following 123-residue polypeptide: MATFEEVSVLGFEEFDKAVKEHEGKTIFAYFSGSKDTEGKSWCPDCVEAEPVIREGLKHVTEDCVFIYCQVGDKPYWKDPNNDFRQKLKITAVPTLLKYGTPQKLVESECCQSSLVEMIFSED.

Alanine 2 is subject to N-acetylalanine. A Thioredoxin domain is found at 41–123 (SWCPDCVEAE…SLVEMIFSED (83 aa)). Active-site nucleophile residues include cysteine 43 and cysteine 46. The cysteines at positions 43 and 46 are disulfide-linked.

Belongs to the thioredoxin family. Interacts with TRXR1 and DYNLL1/DNCL1. In terms of processing, the oxidized protein is reduced by TRXR1.

The protein resides in the cytoplasm. In terms of biological role, disulfide reductase. May participate in various redox reactions through the reversible oxidation of its active center dithiol to a disulfide and catalyze dithiol-disulfide exchange reactions. Modulates TNF-alpha signaling and NF-kappa-B activation. Has peroxidase activity and may contribute to the elimination of cellular hydrogen peroxide. The sequence is that of Thioredoxin domain-containing protein 17 (Txndc17) from Mus musculus (Mouse).